The primary structure comprises 136 residues: Large ribosomal subunit protein uL16 (136 aa).

Belongs to the universal ribosomal protein uL16 family. In terms of assembly, part of the 50S ribosomal subunit.

In terms of biological role, binds 23S rRNA and is also seen to make contacts with the A and possibly P site tRNAs. This chain is Large ribosomal subunit protein uL16, found in Ehrlichia chaffeensis (strain ATCC CRL-10679 / Arkansas).